The following is a 354-amino-acid chain: Methylthioribose-1-phosphate isomerase (354 aa).

Residues arginine 45–alanine 47, arginine 87, and glutamine 204 contribute to the substrate site. The active-site Proton donor is the aspartate 245. Residue asparagine 255 to lysine 256 participates in substrate binding.

It belongs to the eIF-2B alpha/beta/delta subunits family. MtnA subfamily.

The catalysed reaction is 5-(methylsulfanyl)-alpha-D-ribose 1-phosphate = 5-(methylsulfanyl)-D-ribulose 1-phosphate. Its pathway is amino-acid biosynthesis; L-methionine biosynthesis via salvage pathway; L-methionine from S-methyl-5-thio-alpha-D-ribose 1-phosphate: step 1/6. Its function is as follows. Catalyzes the interconversion of methylthioribose-1-phosphate (MTR-1-P) into methylthioribulose-1-phosphate (MTRu-1-P). The protein is Methylthioribose-1-phosphate isomerase of Chlorobaculum tepidum (strain ATCC 49652 / DSM 12025 / NBRC 103806 / TLS) (Chlorobium tepidum).